We begin with the raw amino-acid sequence, 512 residues long: NADH-quinone oxidoreductase subunit N 2 (512 aa).

A run of 14 helical transmembrane segments spans residues 23–43, 50–70, 88–108, 120–140, 144–164, 179–199, 220–240, 254–274, 295–315, 323–343, 351–371, 394–414, 429–449, and 477–497; these read AFVP…IDLF, TIIP…VYLQ, FAIF…LISI, SLGE…LMAS, LLMM…LVGY, VIYG…IYGL, ITLM…AGVV, PTPI…AMLI, WVTL…VVAL, LLAY…IVAD, LFYL…IILI, AASL…VGFI, VFVW…YFYF, and LVAF…PLSV.

Belongs to the complex I subunit 2 family. NDH-1 is composed of 14 different subunits. Subunits NuoA, H, J, K, L, M, N constitute the membrane sector of the complex.

The protein resides in the cell inner membrane. The catalysed reaction is a quinone + NADH + 5 H(+)(in) = a quinol + NAD(+) + 4 H(+)(out). NDH-1 shuttles electrons from NADH, via FMN and iron-sulfur (Fe-S) centers, to quinones in the respiratory chain. The immediate electron acceptor for the enzyme in this species is believed to be a menaquinone. Couples the redox reaction to proton translocation (for every two electrons transferred, four hydrogen ions are translocated across the cytoplasmic membrane), and thus conserves the redox energy in a proton gradient. The sequence is that of NADH-quinone oxidoreductase subunit N 2 from Chloroherpeton thalassium (strain ATCC 35110 / GB-78).